Consider the following 567-residue polypeptide: 25S rRNA (cytosine-C(5))-methyltransferase NSUN5 (567 aa).

The segment covering 1-17 (MVARRNKPKAPLVKHRF) has biased composition (basic residues). The tract at residues 1–88 (MVARRNKPKA…KTPPATKQKF (88 aa)) is disordered. S-adenosyl-L-methionine contacts are provided by residues 312–318 (CSAPGNK), glutamate 336, aspartate 363, and aspartate 383. The Nucleophile role is filled by cysteine 444.

Belongs to the class I-like SAM-binding methyltransferase superfamily. RsmB/NOP family.

The catalysed reaction is a cytidine in 25S rRNA + S-adenosyl-L-methionine = a 5-methylcytidine in 25S rRNA + S-adenosyl-L-homocysteine + H(+). Its function is as follows. S-adenosyl-L-methionine-dependent methyltransferase that specifically methylates the C(5) position of cytosine 2268 (m5C2268) in 25S rRNA. The polypeptide is 25S rRNA (cytosine-C(5))-methyltransferase NSUN5 (Arabidopsis thaliana (Mouse-ear cress)).